The following is a 472-amino-acid chain: Glutamate--tRNA ligase (472 aa).

The 'HIGH' region motif lies at 9–19 (PSPTGYLHVGG). The Zn(2+) site is built by Cys-98, Cys-100, Cys-125, and His-127. The 'KMSKS' region signature appears at 237–241 (KLSKR). Lys-240 is a binding site for ATP.

Belongs to the class-I aminoacyl-tRNA synthetase family. Glutamate--tRNA ligase type 1 subfamily. As to quaternary structure, monomer. It depends on Zn(2+) as a cofactor.

Its subcellular location is the cytoplasm. It catalyses the reaction tRNA(Glu) + L-glutamate + ATP = L-glutamyl-tRNA(Glu) + AMP + diphosphate. Functionally, catalyzes the attachment of glutamate to tRNA(Glu) in a two-step reaction: glutamate is first activated by ATP to form Glu-AMP and then transferred to the acceptor end of tRNA(Glu). The chain is Glutamate--tRNA ligase from Klebsiella pneumoniae (strain 342).